Consider the following 288-residue polypeptide: 4-diphosphocytidyl-2-C-methyl-D-erythritol kinase (288 aa).

K22 is a catalytic residue. P104 to S114 provides a ligand contact to ATP. The active site involves D146.

Belongs to the GHMP kinase family. IspE subfamily.

It carries out the reaction 4-CDP-2-C-methyl-D-erythritol + ATP = 4-CDP-2-C-methyl-D-erythritol 2-phosphate + ADP + H(+). The protein operates within isoprenoid biosynthesis; isopentenyl diphosphate biosynthesis via DXP pathway; isopentenyl diphosphate from 1-deoxy-D-xylulose 5-phosphate: step 3/6. Its function is as follows. Catalyzes the phosphorylation of the position 2 hydroxy group of 4-diphosphocytidyl-2C-methyl-D-erythritol. This is 4-diphosphocytidyl-2-C-methyl-D-erythritol kinase from Protochlamydia amoebophila (strain UWE25).